The following is a 320-amino-acid chain: MNKNLEANRNRTLSEGIHKNIKVRAPKIDKTAISPYDRYCDGYGMPGAYGNGYVSVLKVSVGTVKKTDDILLDGIVSYDRAEINDAYVGQINMLTASSFCGVAGQVWGHDLATHDSIAKDEIKPLYELKQFDGTPLKVYDAKPLLEAGIELFGTEKNRRFTTAPGAHVICANKSATAYRPKENRPLKEGEAYGVWSFIALSLSNDRDHCADLFIEDAGLWTKNDNPEDLKKFLEDHRKAVTWSVVECGRDSHVVFERTYIGFAYVIMKPGEIGNALTCAPYVTLARDAVPSEGFPSLNRISLSQWLDDMNFDSLVNPSKK.

A propeptide spanning residues 2–11 (NKNLEANRNR) is cleaved from the precursor. Ser-98 bears the Pyruvic acid (Ser) mark. Glu-215 serves as the catalytic Proton donor.

In terms of assembly, the proenzyme is a hexamer of identical pi chains; each pi chain monomer is cleaved to form a small (or beta) chain and a large (or alpha) chain by non-hydrolytic self-catalysis. Pyruvate serves as cofactor.

It catalyses the reaction L-histidine + H(+) = histamine + CO2. In Clostridium perfringens (strain 13 / Type A), this protein is Histidine decarboxylase proenzyme (hdc).